We begin with the raw amino-acid sequence, 492 residues long: Protein nucleotidyltransferase YdiU (492 aa).

ATP-binding residues include Gly-90, Gly-92, Arg-93, Lys-113, Asp-125, Gly-126, Arg-176, and Arg-183. Asp-252 serves as the catalytic Proton acceptor. Mg(2+) contacts are provided by Asn-253 and Asp-262. Asp-262 provides a ligand contact to ATP.

The protein belongs to the SELO family. The cofactor is Mg(2+). Mn(2+) is required as a cofactor.

It catalyses the reaction L-seryl-[protein] + ATP = 3-O-(5'-adenylyl)-L-seryl-[protein] + diphosphate. The enzyme catalyses L-threonyl-[protein] + ATP = 3-O-(5'-adenylyl)-L-threonyl-[protein] + diphosphate. It carries out the reaction L-tyrosyl-[protein] + ATP = O-(5'-adenylyl)-L-tyrosyl-[protein] + diphosphate. The catalysed reaction is L-histidyl-[protein] + UTP = N(tele)-(5'-uridylyl)-L-histidyl-[protein] + diphosphate. It catalyses the reaction L-seryl-[protein] + UTP = O-(5'-uridylyl)-L-seryl-[protein] + diphosphate. The enzyme catalyses L-tyrosyl-[protein] + UTP = O-(5'-uridylyl)-L-tyrosyl-[protein] + diphosphate. In terms of biological role, nucleotidyltransferase involved in the post-translational modification of proteins. It can catalyze the addition of adenosine monophosphate (AMP) or uridine monophosphate (UMP) to a protein, resulting in modifications known as AMPylation and UMPylation. This is Protein nucleotidyltransferase YdiU from Thioalkalivibrio sulfidiphilus (strain HL-EbGR7).